The sequence spans 89 residues: Small ribosomal subunit protein bS20 (89 aa).

It belongs to the bacterial ribosomal protein bS20 family.

In terms of biological role, binds directly to 16S ribosomal RNA. This is Small ribosomal subunit protein bS20 from Xanthobacter autotrophicus (strain ATCC BAA-1158 / Py2).